Here is a 275-residue protein sequence, read N- to C-terminus: NH(3)-dependent NAD(+) synthetase (275 aa).

46-53 is an ATP binding site; it reads GISGGQDS. A Mg(2+)-binding site is contributed by aspartate 52. A deamido-NAD(+)-binding site is contributed by arginine 140. Threonine 160 contacts ATP. Mg(2+) is bound at residue glutamate 165. Deamido-NAD(+) is bound by residues lysine 173 and aspartate 180. 2 residues coordinate ATP: lysine 189 and threonine 211. Residue 260 to 261 coordinates deamido-NAD(+); that stretch reads HK.

Belongs to the NAD synthetase family. Homodimer.

It catalyses the reaction deamido-NAD(+) + NH4(+) + ATP = AMP + diphosphate + NAD(+) + H(+). The protein operates within cofactor biosynthesis; NAD(+) biosynthesis; NAD(+) from deamido-NAD(+) (ammonia route): step 1/1. In terms of biological role, catalyzes the ATP-dependent amidation of deamido-NAD to form NAD. Uses ammonia as a nitrogen source. In Erwinia tasmaniensis (strain DSM 17950 / CFBP 7177 / CIP 109463 / NCPPB 4357 / Et1/99), this protein is NH(3)-dependent NAD(+) synthetase.